A 478-amino-acid polypeptide reads, in one-letter code: Kynureninase (478 aa).

Pyridoxal 5'-phosphate-binding positions include Leu-138, Thr-139, 166 to 169 (FPSD), Asp-252, His-255, and Tyr-277. The residue at position 278 (Lys-278) is an N6-(pyridoxal phosphate)lysine. Positions 315 and 343 each coordinate pyridoxal 5'-phosphate.

It belongs to the kynureninase family. As to quaternary structure, homodimer. Pyridoxal 5'-phosphate is required as a cofactor.

The protein localises to the cytoplasm. It catalyses the reaction L-kynurenine + H2O = anthranilate + L-alanine + H(+). The catalysed reaction is 3-hydroxy-L-kynurenine + H2O = 3-hydroxyanthranilate + L-alanine + H(+). It participates in amino-acid degradation; L-kynurenine degradation; L-alanine and anthranilate from L-kynurenine: step 1/1. Its pathway is cofactor biosynthesis; NAD(+) biosynthesis; quinolinate from L-kynurenine: step 2/3. In terms of biological role, catalyzes the cleavage of L-kynurenine (L-Kyn) and L-3-hydroxykynurenine (L-3OHKyn) into anthranilic acid (AA) and 3-hydroxyanthranilic acid (3-OHAA), respectively. The polypeptide is Kynureninase (Coccidioides immitis (strain RS) (Valley fever fungus)).